A 518-amino-acid chain; its full sequence is GMP synthase [glutamine-hydrolyzing] (518 aa).

The Glutamine amidotransferase type-1 domain maps to 8 to 201; it reads TVLIIDFGSQ…VHKISGLKGN (194 aa). Cys-85 acts as the Nucleophile in catalysis. Active-site residues include His-175 and Glu-177. The GMPS ATP-PPase domain occupies 202-393; the sequence is WSMASYRDQA…LGLPEQFLGR (192 aa). 229–235 is a binding site for ATP; it reads SGGVDSS.

In terms of assembly, homodimer.

The catalysed reaction is XMP + L-glutamine + ATP + H2O = GMP + L-glutamate + AMP + diphosphate + 2 H(+). Its pathway is purine metabolism; GMP biosynthesis; GMP from XMP (L-Gln route): step 1/1. Catalyzes the synthesis of GMP from XMP. The protein is GMP synthase [glutamine-hydrolyzing] of Bartonella quintana (strain Toulouse) (Rochalimaea quintana).